A 578-amino-acid polypeptide reads, in one-letter code: Arginine--tRNA ligase (578 aa).

Positions 127–137 (PNLAKEMHVGH) match the 'HIGH' region motif.

The protein belongs to the class-I aminoacyl-tRNA synthetase family. Monomer.

The protein localises to the cytoplasm. The enzyme catalyses tRNA(Arg) + L-arginine + ATP = L-arginyl-tRNA(Arg) + AMP + diphosphate. This chain is Arginine--tRNA ligase, found in Pseudomonas syringae pv. tomato (strain ATCC BAA-871 / DC3000).